We begin with the raw amino-acid sequence, 606 residues long: Elongation factor 4 (606 aa).

The tr-type G domain maps to Ser7–Lys189. Residues Asp19 to Thr24 and Asn136 to Asp139 each bind GTP.

Belongs to the TRAFAC class translation factor GTPase superfamily. Classic translation factor GTPase family. LepA subfamily.

The protein localises to the cell inner membrane. It carries out the reaction GTP + H2O = GDP + phosphate + H(+). Functionally, required for accurate and efficient protein synthesis under certain stress conditions. May act as a fidelity factor of the translation reaction, by catalyzing a one-codon backward translocation of tRNAs on improperly translocated ribosomes. Back-translocation proceeds from a post-translocation (POST) complex to a pre-translocation (PRE) complex, thus giving elongation factor G a second chance to translocate the tRNAs correctly. Binds to ribosomes in a GTP-dependent manner. The sequence is that of Elongation factor 4 from Synechococcus sp. (strain CC9605).